A 461-amino-acid polypeptide reads, in one-letter code: Photosystem II CP43 reaction center protein (461 aa).

5 consecutive transmembrane segments (helical) span residues 57 to 81 (LFEV…SHLA), 122 to 143 (LRGP…KDKN), 166 to 188 (KAMF…RIIS), 243 to 263 (KPFG…LSYS), and 279 to 300 (WYNN…ASQS). Glu-355 provides a ligand contact to [CaMn4O5] cluster. Residues 435-459 (RARAAAAGFEKGIDRATEPVLAMRD) form a helical membrane-spanning segment.

It belongs to the PsbB/PsbC family. PsbC subfamily. As to quaternary structure, PSII is composed of 1 copy each of membrane proteins PsbA, PsbB, PsbC, PsbD, PsbE, PsbF, PsbH, PsbI, PsbJ, PsbK, PsbL, PsbM, PsbT, PsbX, PsbY, PsbZ, Psb30/Ycf12, peripheral proteins PsbO, CyanoQ (PsbQ), PsbU, PsbV and a large number of cofactors. It forms dimeric complexes. Requires Binds multiple chlorophylls and provides some of the ligands for the Ca-4Mn-5O cluster of the oxygen-evolving complex. It may also provide a ligand for a Cl- that is required for oxygen evolution. PSII binds additional chlorophylls, carotenoids and specific lipids. as cofactor.

It localises to the cellular thylakoid membrane. Its function is as follows. One of the components of the core complex of photosystem II (PSII). It binds chlorophyll and helps catalyze the primary light-induced photochemical processes of PSII. PSII is a light-driven water:plastoquinone oxidoreductase, using light energy to abstract electrons from H(2)O, generating O(2) and a proton gradient subsequently used for ATP formation. The polypeptide is Photosystem II CP43 reaction center protein (Synechococcus elongatus (strain ATCC 33912 / PCC 7942 / FACHB-805) (Anacystis nidulans R2)).